The sequence spans 294 residues: Transcription factor nsy-7 (294 aa).

2 disordered regions span residues 43–119 (CNLR…TPDL) and 167–191 (LRLPNGNGTEKYHPYGGNSKNDSPL). Composition is skewed to polar residues over residues 52–63 (DQPTTSSNSVKE) and 81–115 (RRQSNPHSSLPAISSSTVKNEPTDSWTPSALSNDP). The segment at residues 192-232 (QTRMKGWQREYIKEVIKDSHYPTEEELRDIEQKCDLSRKQI) is a DNA-binding region (homeobox; atypical). The segment at 238–274 (KRLTNPNRKPRVNHHDEKRKEQEERDSLADPDDDMIN) is disordered. Positions 250–265 (NHHDEKRKEQEERDSL) are enriched in basic and acidic residues.

As to expression, expressed widely, including gut, the amphid sheath glial cells, and head and tail neurons including AWC, ASE, and ASH. Expressed in AWC (ON) olfactory neuron but not AWC (OFF).

It localises to the nucleus. In terms of biological role, transcriptional regulator which binds DNA consensus sequence 5'-CCTTAAC-3'. Plays a role in establishing and maintaining asymmetric cell fates in chemosensory AWC neurons during larval neuronal development. This is achieved by repressing the expression of multiple AWC (OFF) genes, including srsx-3 and hlh-11 in the AWC (ON) neuron. Activates expression of sox-2 in the AWC (ON) neuron. This Caenorhabditis elegans protein is Transcription factor nsy-7.